We begin with the raw amino-acid sequence, 299 residues long: ATP phosphoribosyltransferase (299 aa).

It belongs to the ATP phosphoribosyltransferase family. Long subfamily. In terms of assembly, equilibrium between an active dimeric form, an inactive hexameric form and higher aggregates. Interconversion between the various forms is largely reversible and is influenced by the natural substrates and inhibitors of the enzyme. It depends on Mg(2+) as a cofactor.

It localises to the cytoplasm. The enzyme catalyses 1-(5-phospho-beta-D-ribosyl)-ATP + diphosphate = 5-phospho-alpha-D-ribose 1-diphosphate + ATP. The protein operates within amino-acid biosynthesis; L-histidine biosynthesis; L-histidine from 5-phospho-alpha-D-ribose 1-diphosphate: step 1/9. Feedback inhibited by histidine. Catalyzes the condensation of ATP and 5-phosphoribose 1-diphosphate to form N'-(5'-phosphoribosyl)-ATP (PR-ATP). Has a crucial role in the pathway because the rate of histidine biosynthesis seems to be controlled primarily by regulation of HisG enzymatic activity. The polypeptide is ATP phosphoribosyltransferase (Enterobacter sp. (strain 638)).